The sequence spans 473 residues: 7-dehydrocholesterol reductase (473 aa).

Residues Met-1 to Glu-20 are disordered. Helical transmembrane passes span Phe-36–Val-56, Ile-97–His-117, Trp-175–Val-195, Val-264–Trp-284, Leu-304–Val-324, and Glu-329–Phe-349. NADP(+)-binding positions include Lys-356, Arg-360, Met-393, Trp-398, and Asn-405 to Tyr-406. Residues Ala-419–Val-439 traverse the membrane as a helical segment. Residues Asp-445, Cys-449–Tyr-453, and Tyr-460 contribute to the NADP(+) site.

This sequence belongs to the ERG4/ERG24 family.

It localises to the endoplasmic reticulum membrane. The enzyme catalyses cholesterol + NADP(+) = 7-dehydrocholesterol + NADPH + H(+). The catalysed reaction is 7-dehydrodesmosterol + NADPH + H(+) = desmosterol + NADP(+). It participates in steroid biosynthesis; cholesterol biosynthesis. Functionally, catalyzes the last step of the cholesterol synthesis pathway, which transforms cholesta-5,7-dien-3beta-ol (7-dehydrocholesterol,7-DHC) into cholesterol by reducing the C7-C8 double bond of its sterol core. Can also metabolize cholesta-5,7,24-trien-3beta-ol (7-dehydrodemosterol, 7-DHD) to desmosterol, which is then metabolized by the Delta(24)-sterol reductase (DHCR24) to cholesterol. Modulates ferroptosis (a form of regulated cell death driven by iron-dependent lipid peroxidation) through the metabolic breakdown of the anti-ferroptotic metabolites 7-DHC and 7-DHD which, when accumulated, divert the propagation of peroxyl radical-mediated damage from phospholipid components to its sterol core, protecting plasma and mitochondrial membranes from phospholipid autoxidation. The protein is 7-dehydrocholesterol reductase (dhcr7) of Xenopus laevis (African clawed frog).